The primary structure comprises 280 residues: Cycloeucalenol cycloisomerase (280 aa).

6 helical membrane-spanning segments follow: residues 22-42 (LFFLFYTPFWLTLCLGIVVPY), 53-73 (YLLLALVSAVPAFVIPMLLVG), 89-109 (ANLWIIVFSYVGNYFWTHYFF), 167-187 (FEAAWILALSYFIAYLETIAI), 201-221 (MYRVGCLFYAIYFIVSFPMFF), and 244-264 (AMLVTIILDLWRLFLGPIVPL).

The protein resides in the membrane. The enzyme catalyses cycloeucalenol = obtusifoliol. Its function is as follows. Converts pentacyclic cyclopropyl sterols to tetracyclic sterols. The chain is Cycloeucalenol cycloisomerase (CPI1) from Arabidopsis thaliana (Mouse-ear cress).